We begin with the raw amino-acid sequence, 196 residues long: Holliday junction branch migration complex subunit RuvA (196 aa).

Positions 1-65 (MIGYLRGKII…EDALQLFGFH (65 aa)) are domain I. Positions 66-140 (DKEEKNLFLS…GKLVSIEEGG (75 aa)) are domain II. The interval 140–144 (GVVAK) is flexible linker. Positions 145–196 (AKSVAHTQITSALLNLGYKSQLVDQFVSSLPADIAVEDGIRKGFQTLSGGLS) are domain III.

The protein belongs to the RuvA family. As to quaternary structure, homotetramer. Forms an RuvA(8)-RuvB(12)-Holliday junction (HJ) complex. HJ DNA is sandwiched between 2 RuvA tetramers; dsDNA enters through RuvA and exits via RuvB. An RuvB hexamer assembles on each DNA strand where it exits the tetramer. Each RuvB hexamer is contacted by two RuvA subunits (via domain III) on 2 adjacent RuvB subunits; this complex drives branch migration. In the full resolvosome a probable DNA-RuvA(4)-RuvB(12)-RuvC(2) complex forms which resolves the HJ.

The protein resides in the cytoplasm. Functionally, the RuvA-RuvB-RuvC complex processes Holliday junction (HJ) DNA during genetic recombination and DNA repair, while the RuvA-RuvB complex plays an important role in the rescue of blocked DNA replication forks via replication fork reversal (RFR). RuvA specifically binds to HJ cruciform DNA, conferring on it an open structure. The RuvB hexamer acts as an ATP-dependent pump, pulling dsDNA into and through the RuvAB complex. HJ branch migration allows RuvC to scan DNA until it finds its consensus sequence, where it cleaves and resolves the cruciform DNA. The polypeptide is Holliday junction branch migration complex subunit RuvA (Bdellovibrio bacteriovorus (strain ATCC 15356 / DSM 50701 / NCIMB 9529 / HD100)).